The primary structure comprises 436 residues: Trigger factor (436 aa).

One can recognise a PPIase FKBP-type domain in the interval 163 to 248 (DDRIVLDFAG…VKEVAEAVLP (86 aa)).

Belongs to the FKBP-type PPIase family. Tig subfamily.

It localises to the cytoplasm. The catalysed reaction is [protein]-peptidylproline (omega=180) = [protein]-peptidylproline (omega=0). Functionally, involved in protein export. Acts as a chaperone by maintaining the newly synthesized protein in an open conformation. Functions as a peptidyl-prolyl cis-trans isomerase. This Bordetella avium (strain 197N) protein is Trigger factor.